Here is an 820-residue protein sequence, read N- to C-terminus: Leucine--tRNA ligase (820 aa).

The 'HIGH' region signature appears at 42–52 (PYPSGDLHMGH). The 'KMSKS' region signature appears at 576–580 (KMSKS). Lysine 579 is an ATP binding site.

This sequence belongs to the class-I aminoacyl-tRNA synthetase family.

The protein localises to the cytoplasm. It carries out the reaction tRNA(Leu) + L-leucine + ATP = L-leucyl-tRNA(Leu) + AMP + diphosphate. The polypeptide is Leucine--tRNA ligase (Coxiella burnetii (strain Dugway 5J108-111)).